The following is a 232-amino-acid chain: Thiamine import ATP-binding protein ThiQ (232 aa).

The ABC transporter domain maps to 2–230; sequence LKLTDITWLY…KASASALLGI (229 aa). 32 to 39 is a binding site for ATP; sequence GPSGAGKS.

Belongs to the ABC transporter superfamily. Thiamine importer (TC 3.A.1.19.1) family. In terms of assembly, the complex is composed of two ATP-binding proteins (ThiQ), two transmembrane proteins (ThiP) and a solute-binding protein (ThiB).

It localises to the cell inner membrane. It catalyses the reaction thiamine(out) + ATP + H2O = thiamine(in) + ADP + phosphate + H(+). Part of the ABC transporter complex ThiBPQ involved in thiamine import. Responsible for energy coupling to the transport system. The protein is Thiamine import ATP-binding protein ThiQ of Escherichia coli (strain UTI89 / UPEC).